A 248-amino-acid chain; its full sequence is Proteasome subunit alpha type-7 (248 aa).

O-linked (GlcNAc) serine glycosylation is present at S130. Y153 is subject to Phosphotyrosine; by ABL1 and ABL2. K227 is subject to N6-acetyllysine.

Belongs to the peptidase T1A family. In terms of assembly, the 26S proteasome consists of a 20S proteasome core and two 19S regulatory subunits. The 20S proteasome core is a barrel-shaped complex made of 28 subunits that are arranged in four stacked rings. The two outer rings are each formed by seven alpha subunits, and the two inner rings are formed by seven beta subunits. The proteolytic activity is exerted by three beta-subunits PSMB5, PSMB6 and PSMB7. PSMA7 interacts directly with the PSMG1-PSMG2 heterodimer which promotes 20S proteasome assembly. Interacts with HIF1A. Interacts with RAB7A. Interacts with PRKN. Interacts with ABL1 and ABL2. Interacts with EMAP2. Interacts with MAVS. Phosphorylation by ABL1 or ABL2 leads to an inhibition of proteasomal activity and cell cycle transition blocks. In terms of tissue distribution, detected in liver (at protein level).

It is found in the cytoplasm. The protein resides in the nucleus. In terms of biological role, component of the 20S core proteasome complex involved in the proteolytic degradation of most intracellular proteins. This complex plays numerous essential roles within the cell by associating with different regulatory particles. Associated with two 19S regulatory particles, forms the 26S proteasome and thus participates in the ATP-dependent degradation of ubiquitinated proteins. The 26S proteasome plays a key role in the maintenance of protein homeostasis by removing misfolded or damaged proteins that could impair cellular functions, and by removing proteins whose functions are no longer required. Associated with the PA200 or PA28, the 20S proteasome mediates ubiquitin-independent protein degradation. This type of proteolysis is required in several pathways including spermatogenesis (20S-PA200 complex) or generation of a subset of MHC class I-presented antigenic peptides (20S-PA28 complex). In Mus musculus (Mouse), this protein is Proteasome subunit alpha type-7 (Psma7).